The primary structure comprises 156 residues: Small ribosomal subunit protein uS7 (156 aa).

It belongs to the universal ribosomal protein uS7 family. In terms of assembly, part of the 30S ribosomal subunit. Contacts proteins S9 and S11.

One of the primary rRNA binding proteins, it binds directly to 16S rRNA where it nucleates assembly of the head domain of the 30S subunit. Is located at the subunit interface close to the decoding center, probably blocks exit of the E-site tRNA. This chain is Small ribosomal subunit protein uS7, found in Acinetobacter baumannii (strain AB307-0294).